A 224-amino-acid chain; its full sequence is UPF0173 metal-dependent hydrolase TTHA1283 (224 aa).

This sequence belongs to the UPF0173 family.

This is UPF0173 metal-dependent hydrolase TTHA1283 from Thermus thermophilus (strain ATCC 27634 / DSM 579 / HB8).